Reading from the N-terminus, the 236-residue chain is 2-C-methyl-D-erythritol 4-phosphate cytidylyltransferase (236 aa).

The protein belongs to the IspD/TarI cytidylyltransferase family. IspD subfamily. As to quaternary structure, homodimer.

The enzyme catalyses 2-C-methyl-D-erythritol 4-phosphate + CTP + H(+) = 4-CDP-2-C-methyl-D-erythritol + diphosphate. It participates in isoprenoid biosynthesis; isopentenyl diphosphate biosynthesis via DXP pathway; isopentenyl diphosphate from 1-deoxy-D-xylulose 5-phosphate: step 2/6. Functionally, catalyzes the formation of 4-diphosphocytidyl-2-C-methyl-D-erythritol from CTP and 2-C-methyl-D-erythritol 4-phosphate (MEP). The sequence is that of 2-C-methyl-D-erythritol 4-phosphate cytidylyltransferase from Escherichia coli O45:K1 (strain S88 / ExPEC).